Here is a 430-residue protein sequence, read N- to C-terminus: Nitroalkane oxidase (430 aa).

FAD is bound by residues Leu-132–Ser-135, Val-140–Asn-142, Trp-170–Thr-172, Arg-301, Gln-311, Asn-372–Ile-376, and Ile-397–Gly-401. The active-site Proton acceptor is Asp-399.

This sequence belongs to the acyl-CoA dehydrogenase family. As to quaternary structure, homotetramer. It depends on FAD as a cofactor.

The enzyme catalyses a primary nitroalkane + O2 + H2O = an aldehyde + nitrite + H2O2 + H(+). The catalysed reaction is a secondary nitroalkane + O2 + H2O = a ketone + nitrite + H2O2 + H(+). Its function is as follows. Nitroalkane oxidase (NAO) catalyzes the oxidation of nitroalkanes to the corresponding aldehydes or ketones with the release of nitrite and the consumption of molecular oxygen to yield hydrogen peroxide. NAO is unusual, since it catalyzes substrate oxidation by removing a substrate proton to form a carbanion intermediate. Prefers longer nitroalkanes, with 1-nitrohexane having the highest activity. This Podospora anserina (strain S / ATCC MYA-4624 / DSM 980 / FGSC 10383) (Pleurage anserina) protein is Nitroalkane oxidase.